Reading from the N-terminus, the 420-residue chain is Serine palmitoyltransferase (420 aa).

Pyridoxal 5'-phosphate is bound by residues 134 to 135, His-234, Thr-262, and Ser-264; that span reads GY. At Lys-265 the chain carries N6-(pyridoxal phosphate)lysine.

Belongs to the class-II pyridoxal-phosphate-dependent aminotransferase family. Homodimer. Pyridoxal 5'-phosphate serves as cofactor.

It localises to the cytoplasm. The enzyme catalyses L-serine + hexadecanoyl-CoA + H(+) = 3-oxosphinganine + CO2 + CoA. Its pathway is lipid metabolism; sphingolipid metabolism. Not inhibited by relatively high concentrations of palmitoyl-CoA. Inhibited by both D-cycloserine (DCS) and L-cycloserine (LCS), which inactivate SPT by transamination to form a free pyridoxamine 5'-phosphate (PMP) and beta-aminooxyacetaldehyde that remain bound at the active site. Inhibition is reversed by incubation with excess pyridoxal phosphate. Inhibited by the fungal natural product myriocin, which acts as a competitive inhibitor for both L-serine and palmitoyl-CoA substrates. Functionally, catalyzes the condensation of L-serine with palmitoyl-CoA (hexadecanoyl-CoA) to produce 3-oxosphinganine. Exhibits a broad substrate specificity concerning the chain length and the degree of unsaturation of acyl-CoA. The protein is Serine palmitoyltransferase of Sphingomonas paucimobilis (Pseudomonas paucimobilis).